Reading from the N-terminus, the 621-residue chain is MKRKLDANDVPSAEVAEGKEAKDADNTDFENLNLDPRLRQALIKEQFTKPTPVQSKAIPLALEGKDILARAKTGSGKTAAYVLPILQTILQKKAADPSLKATTGLILVPTRELAEQVQSVITKFTAFCGKDVRSVNLTQKVSDAVQRTMLADYPDLIVSTPARVIANLGSSALALDNLTHLVIDEADLVLSYGYDEDINALAKAIPRGVQTFLMSATLTSEVDTLKGLFCRNPVVLKLEDKEDEGAGISQFVVRCAEDEKFLLTYVIFKLQLIKGKVIIFVGDIDRCYRVKLFLEQFGIKSCVLNSELPINSRIHVVQEFNKGVYDIIIAADEQEVMGARTTFKKSKEITDGDEEETRDKMGSSEDEDNEPEDNDKKSAHPEKRRKTSGKGKDYGISRGIDFQNVACVLNFDLPTTSKSYTHRIGRTGRAGKAGMALSFVVPADEFGKHKPTSFPTAKYDESVLAKIVKRQAKLDHEVKPYHFEMKQVDAFRYRMTDALRSVTRLAIQEARAREIRQELVKSEKLKRHFEENPEELKQLRHDGELRAARIQPHLKHIPDYLMPSKGRKGISSENVGYVGFTKQSDNRIRKAREKNRGKGKGRKPSGVRKVDPLKTFNRGRK.

The tract at residues 1–30 is disordered; sequence MKRKLDANDVPSAEVAEGKEAKDADNTDFE. Residues 16 to 25 show a composition bias toward basic and acidic residues; the sequence is AEGKEAKDAD. Positions 27–55 match the Q motif motif; sequence TDFENLNLDPRLRQALIKEQFTKPTPVQS. Residues 58-236 form the Helicase ATP-binding domain; it reads IPLALEGKDI…GLFCRNPVVL (179 aa). Residue 71–78 coordinates ATP; it reads AKTGSGKT. Residues 184–187 carry the DEAD box motif; that stretch reads DEAD. The 243-residue stretch at 247–489 folds into the Helicase C-terminal domain; it reads GISQFVVRCA…PYHFEMKQVD (243 aa). Disordered stretches follow at residues 342–393 and 581–621; these read TFKK…KGKD and TKQS…RGRK. A compositionally biased stretch (acidic residues) spans 364-373; that stretch reads SEDEDNEPED. Basic residues predominate over residues 589-606; sequence RKAREKNRGKGKGRKPSG.

The protein belongs to the DEAD box helicase family. DDX56/DBP9 subfamily.

It is found in the nucleus. The protein resides in the nucleolus. It carries out the reaction ATP + H2O = ADP + phosphate + H(+). ATP-binding RNA helicase involved in the biogenesis of 60S ribosomal subunits and is required for the normal formation of 25S and 5.8S rRNAs. This is ATP-dependent RNA helicase dbp9 (dbp9) from Aspergillus clavatus (strain ATCC 1007 / CBS 513.65 / DSM 816 / NCTC 3887 / NRRL 1 / QM 1276 / 107).